A 92-amino-acid chain; its full sequence is Small ribosomal subunit protein uS19c (92 aa).

The protein belongs to the universal ribosomal protein uS19 family.

It is found in the plastid. The protein localises to the chloroplast. Protein S19 forms a complex with S13 that binds strongly to the 16S ribosomal RNA. The sequence is that of Small ribosomal subunit protein uS19c from Guizotia abyssinica (Niger).